A 491-amino-acid polypeptide reads, in one-letter code: Protein nucleotidyltransferase YdiU (491 aa).

ATP-binding residues include glycine 88, glycine 90, arginine 91, lysine 111, aspartate 123, glycine 124, arginine 174, and arginine 181. Aspartate 250 (proton acceptor) is an active-site residue. Positions 251 and 260 each coordinate Mg(2+). Aspartate 260 contributes to the ATP binding site.

Belongs to the SELO family. Requires Mg(2+) as cofactor. Mn(2+) serves as cofactor.

The catalysed reaction is L-seryl-[protein] + ATP = 3-O-(5'-adenylyl)-L-seryl-[protein] + diphosphate. It carries out the reaction L-threonyl-[protein] + ATP = 3-O-(5'-adenylyl)-L-threonyl-[protein] + diphosphate. The enzyme catalyses L-tyrosyl-[protein] + ATP = O-(5'-adenylyl)-L-tyrosyl-[protein] + diphosphate. It catalyses the reaction L-histidyl-[protein] + UTP = N(tele)-(5'-uridylyl)-L-histidyl-[protein] + diphosphate. The catalysed reaction is L-seryl-[protein] + UTP = O-(5'-uridylyl)-L-seryl-[protein] + diphosphate. It carries out the reaction L-tyrosyl-[protein] + UTP = O-(5'-uridylyl)-L-tyrosyl-[protein] + diphosphate. Functionally, nucleotidyltransferase involved in the post-translational modification of proteins. It can catalyze the addition of adenosine monophosphate (AMP) or uridine monophosphate (UMP) to a protein, resulting in modifications known as AMPylation and UMPylation. The sequence is that of Protein nucleotidyltransferase YdiU from Rhodopseudomonas palustris (strain BisB18).